The chain runs to 170 residues: NADH-quinone oxidoreductase subunit B (170 aa).

4 residues coordinate [4Fe-4S] cluster: Cys37, Cys38, Cys102, and Cys131.

It belongs to the complex I 20 kDa subunit family. As to quaternary structure, NDH-1 is composed of 14 different subunits. Subunits NuoB, C, D, E, F, and G constitute the peripheral sector of the complex. The cofactor is [4Fe-4S] cluster.

The protein localises to the cell inner membrane. It catalyses the reaction a quinone + NADH + 5 H(+)(in) = a quinol + NAD(+) + 4 H(+)(out). Its function is as follows. NDH-1 shuttles electrons from NADH, via FMN and iron-sulfur (Fe-S) centers, to quinones in the respiratory chain. The immediate electron acceptor for the enzyme in this species is believed to be ubiquinone. Couples the redox reaction to proton translocation (for every two electrons transferred, four hydrogen ions are translocated across the cytoplasmic membrane), and thus conserves the redox energy in a proton gradient. This is NADH-quinone oxidoreductase subunit B from Geobacter metallireducens (strain ATCC 53774 / DSM 7210 / GS-15).